We begin with the raw amino-acid sequence, 132 residues long: Small ribosomal subunit protein uS9 (132 aa).

Residues 100–132 (LKSNGLLTRDDRTKERKKPGLKRARKAPQYTKR) are disordered. The segment covering 114 to 132 (ERKKPGLKRARKAPQYTKR) has biased composition (basic residues).

It belongs to the universal ribosomal protein uS9 family.

The chain is Small ribosomal subunit protein uS9 from Dehalococcoides mccartyi (strain ATCC BAA-2100 / JCM 16839 / KCTC 5957 / BAV1).